We begin with the raw amino-acid sequence, 349 residues long: Ferredoxin--NADP reductase 1 (349 aa).

7 residues coordinate FAD: glutamate 36, lysine 44, tyrosine 48, valine 88, leucine 123, aspartate 290, and serine 331.

The protein belongs to the ferredoxin--NADP reductase type 2 family. Homodimer. FAD is required as a cofactor.

The catalysed reaction is 2 reduced [2Fe-2S]-[ferredoxin] + NADP(+) + H(+) = 2 oxidized [2Fe-2S]-[ferredoxin] + NADPH. This is Ferredoxin--NADP reductase 1 from Bacillus licheniformis (strain ATCC 14580 / DSM 13 / JCM 2505 / CCUG 7422 / NBRC 12200 / NCIMB 9375 / NCTC 10341 / NRRL NRS-1264 / Gibson 46).